The following is a 90-amino-acid chain: Probable Fe(2+)-trafficking protein (90 aa).

The protein belongs to the Fe(2+)-trafficking protein family.

Could be a mediator in iron transactions between iron acquisition and iron-requiring processes, such as synthesis and/or repair of Fe-S clusters in biosynthetic enzymes. In Marinobacter nauticus (strain ATCC 700491 / DSM 11845 / VT8) (Marinobacter aquaeolei), this protein is Probable Fe(2+)-trafficking protein.